A 457-amino-acid polypeptide reads, in one-letter code: Cysteine--tRNA ligase (457 aa).

Position 28 (Cys-28) interacts with Zn(2+). A 'HIGH' region motif is present at residues 30-40; that stretch reads PTVYDTAHIGN. Cys-212, His-237, and Glu-241 together coordinate Zn(2+). The 'KMSKS' region motif lies at 270–274; that stretch reads KMSKS. Residue Lys-273 coordinates ATP.

Belongs to the class-I aminoacyl-tRNA synthetase family. In terms of assembly, monomer. Zn(2+) is required as a cofactor.

It localises to the cytoplasm. The catalysed reaction is tRNA(Cys) + L-cysteine + ATP = L-cysteinyl-tRNA(Cys) + AMP + diphosphate. In Wolbachia sp. subsp. Drosophila simulans (strain wRi), this protein is Cysteine--tRNA ligase.